The following is a 49-amino-acid chain: Large ribosomal subunit protein bL33 (49 aa).

The protein belongs to the bacterial ribosomal protein bL33 family.

This is Large ribosomal subunit protein bL33 from Desulforudis audaxviator (strain MP104C).